The following is a 181-amino-acid chain: MSNSVVAKRYADALFQLGREKNSLDQLVADFLEVRQIFTNDQKLNVFLKHPKIDNEKKKQFLADVFKGADPVVINTLKLLVDRHRTSTIPSIVDHLVALVNDTKGIADATVYSIRELNTDEKEQLQTSFAKRLGKRSVQITNVVDPKILGGMKIRVGNTIYDGTVSNKLNRISRSIVSANK.

Belongs to the ATPase delta chain family. As to quaternary structure, F-type ATPases have 2 components, F(1) - the catalytic core - and F(0) - the membrane proton channel. F(1) has five subunits: alpha(3), beta(3), gamma(1), delta(1), epsilon(1). F(0) has three main subunits: a(1), b(2) and c(10-14). The alpha and beta chains form an alternating ring which encloses part of the gamma chain. F(1) is attached to F(0) by a central stalk formed by the gamma and epsilon chains, while a peripheral stalk is formed by the delta and b chains.

The protein localises to the cell membrane. In terms of biological role, f(1)F(0) ATP synthase produces ATP from ADP in the presence of a proton or sodium gradient. F-type ATPases consist of two structural domains, F(1) containing the extramembraneous catalytic core and F(0) containing the membrane proton channel, linked together by a central stalk and a peripheral stalk. During catalysis, ATP synthesis in the catalytic domain of F(1) is coupled via a rotary mechanism of the central stalk subunits to proton translocation. This protein is part of the stalk that links CF(0) to CF(1). It either transmits conformational changes from CF(0) to CF(1) or is implicated in proton conduction. This is ATP synthase subunit delta from Oceanobacillus iheyensis (strain DSM 14371 / CIP 107618 / JCM 11309 / KCTC 3954 / HTE831).